A 445-amino-acid chain; its full sequence is Glutamyl-tRNA(Gln) amidotransferase subunit D (445 aa).

An Asparaginase/glutaminase domain is found at Ser93–Asn425. Active-site residues include Thr103, Thr179, Asp180, and Lys258.

It belongs to the asparaginase 1 family. GatD subfamily. In terms of assembly, heterodimer of GatD and GatE.

The enzyme catalyses L-glutamyl-tRNA(Gln) + L-glutamine + ATP + H2O = L-glutaminyl-tRNA(Gln) + L-glutamate + ADP + phosphate + H(+). Allows the formation of correctly charged Gln-tRNA(Gln) through the transamidation of misacylated Glu-tRNA(Gln) in organisms which lack glutaminyl-tRNA synthetase. The reaction takes place in the presence of glutamine and ATP through an activated gamma-phospho-Glu-tRNA(Gln). The GatDE system is specific for glutamate and does not act on aspartate. This is Glutamyl-tRNA(Gln) amidotransferase subunit D from Saccharolobus islandicus (strain Y.N.15.51 / Yellowstone #2) (Sulfolobus islandicus).